Consider the following 141-residue polypeptide: Large ribosomal subunit protein uL11 (141 aa).

The protein belongs to the universal ribosomal protein uL11 family. Part of the ribosomal stalk of the 50S ribosomal subunit. Interacts with L10 and the large rRNA to form the base of the stalk. L10 forms an elongated spine to which L12 dimers bind in a sequential fashion forming a multimeric L10(L12)X complex. Post-translationally, one or more lysine residues are methylated.

In terms of biological role, forms part of the ribosomal stalk which helps the ribosome interact with GTP-bound translation factors. This is Large ribosomal subunit protein uL11 from Synechococcus sp. (strain ATCC 27144 / PCC 6301 / SAUG 1402/1) (Anacystis nidulans).